A 741-amino-acid chain; its full sequence is Protein O-mannosyl-transferase TMTC4 (741 aa).

Topologically, residues 1–14 (MAVLDTDLDHILPS) are cytoplasmic. The chain crosses the membrane as a helical span at residues 15-35 (SVLPPFWAKLVVGSVAIVCFA). Over 36–111 (RSYDGDFVFD…FHPVGFHVVN (76 aa)) the chain is Extracellular. A glycan (N-linked (GlcNAc...) asparagine) is linked at Asn-78. A helical transmembrane segment spans residues 112–132 (ILLHSGISVLMVDVFSVLFGG). Residues 133–141 (LQYTSKGRR) are Cytoplasmic-facing. The chain crosses the membrane as a helical span at residues 142 to 162 (LHLAPRASLLAALLFAVHPVH). Over 163 to 165 (TEC) the chain is Extracellular. A helical transmembrane segment spans residues 166 to 186 (VAGVVGRADLLCALFFLLSFL). Residues 187–198 (GYCKAFRESNKE) are Cytoplasmic-facing. Residues 199–219 (GAHSSTFWVLLSIFLGAVAML) form a helical membrane-spanning segment. Residues 220–224 (CKEQG) lie on the Extracellular side of the membrane. Residues 225-245 (ITVLGLNAVFDILVIGKFNVL) traverse the membrane as a helical segment. At 246–268 (EIVQKVLHKDKSLENLGMLRNGG) the chain is on the cytoplasmic side. The helical transmembrane segment at 269–288 (LLFRMTLLTSGGAGMLYVRW) threads the bilayer. Residues 289–354 (RIMGTGPPAF…PLIKSISDWR (66 aa)) lie on the Extracellular side of the membrane. A helical membrane pass occupies residues 355–375 (VIALAALWFCLIGLICQALCS). The Cytoplasmic segment spans residues 376-382 (EDGHKRR). The helical transmembrane segment at 383–403 (ILTLGLGFLVIPFLPASNLFF) threads the bilayer. Residues 404–412 (RVGFVVAER) lie on the Extracellular side of the membrane. Residues 413 to 433 (VLYLPSVGYCVLLTFGFGALS) form a helical membrane-spanning segment. Residues 434 to 440 (KHTKKKK) lie on the Cytoplasmic side of the membrane. A helical membrane pass occupies residues 441–461 (LIAAVVLGILFINTLRCVLRS). Residues 462 to 741 (GEWRSEEQLF…KLELMQKKAV (280 aa)) are Extracellular-facing. 7 TPR repeats span residues 482 to 515 (AKVH…NPKY), 516 to 549 (VHAM…QPDF), 550 to 583 (AAAW…RRKY), 584 to 617 (PDCY…KPEH), 618 to 651 (SLAW…IPND), 652 to 685 (HSLM…NPNA), and 686 to 719 (ASYH…DPTA). Asn-497 carries N-linked (GlcNAc...) asparagine glycosylation. The N-linked (GlcNAc...) asparagine glycan is linked to Asn-609.

Belongs to the TMTC family.

It localises to the membrane. It is found in the endoplasmic reticulum. It catalyses the reaction a di-trans,poly-cis-dolichyl beta-D-mannosyl phosphate + L-seryl-[protein] = 3-O-(alpha-D-mannosyl)-L-seryl-[protein] + a di-trans,poly-cis-dolichyl phosphate + H(+). The catalysed reaction is a di-trans,poly-cis-dolichyl beta-D-mannosyl phosphate + L-threonyl-[protein] = 3-O-(alpha-D-mannosyl)-L-threonyl-[protein] + a di-trans,poly-cis-dolichyl phosphate + H(+). It functions in the pathway protein modification; protein glycosylation. Its function is as follows. Transfers mannosyl residues to the hydroxyl group of serine or threonine residues. The 4 members of the TMTC family are O-mannosyl-transferases dedicated primarily to the cadherin superfamily, each member seems to have a distinct role in decorating the cadherin domains with O-linked mannose glycans at specific regions. Also acts as O-mannosyl-transferase on other proteins such as PDIA3. In Homo sapiens (Human), this protein is Protein O-mannosyl-transferase TMTC4.